The chain runs to 103 residues: MQPNDITFFQRFQDDILAGRKTITIRDESESHFKTGDVLRVGRFEDDGYFCTIEVTATSTVTLDTLTEKHAEQENMTLTELIKVIADIYPGQTQFYVIEFKCL.

The ASCH domain occupies 6–101 (ITFFQRFQDD…QTQFYVIEFK (96 aa)). Lys-21 functions as the Proton acceptor in the catalytic mechanism. Catalysis depends on Thr-24, which acts as the Nucleophile. Catalysis depends on Glu-74, which acts as the Proton donor.

It belongs to the N(4)-acetylcytidine amidohydrolase family.

It carries out the reaction N(4)-acetylcytidine + H2O = cytidine + acetate + H(+). It catalyses the reaction N(4)-acetyl-2'-deoxycytidine + H2O = 2'-deoxycytidine + acetate + H(+). The catalysed reaction is N(4)-acetylcytosine + H2O = cytosine + acetate + H(+). Functionally, catalyzes the hydrolysis of N(4)-acetylcytidine (ac4C). The sequence is that of N(4)-acetylcytidine amidohydrolase (yqfB) from Escherichia coli O8 (strain IAI1).